Reading from the N-terminus, the 1088-residue chain is RNA-directed RNA polymerase (1088 aa).

Positions 501 to 687 (LSYGDVTRFL…AKRYLAGGKI (187 aa)) constitute a RdRp catalytic domain.

This sequence belongs to the reoviridae RNA-directed RNA polymerase family. In terms of assembly, interacts with VP3 (Potential). Interacts with VP2; this interaction activates VP1. Interacts with NSP5; this interaction is probably necessary for the formation of functional virus factories. Interacts with NSP2; this interaction is weak. Mg(2+) is required as a cofactor.

It localises to the virion. It catalyses the reaction RNA(n) + a ribonucleoside 5'-triphosphate = RNA(n+1) + diphosphate. Its function is as follows. RNA-directed RNA polymerase that is involved in both transcription and genome replication. Together with VP3 capping enzyme, forms an enzyme complex positioned near the channels situated at each of the five-fold vertices of the core. Following infection, the outermost layer of the virus is lost, leaving a double-layered particle (DLP) made up of the core and VP6 shell. VP1 then catalyzes the transcription of fully conservative plus-strand genomic RNAs that are extruded through the DLP's channels into the cytoplasm where they function as mRNAs for translation of viral proteins. One copy of each of the viral (+)RNAs is also recruited during core assembly, together with newly synthesized polymerase complexes and VP2. The polymerase of these novo-formed particles catalyzes the synthesis of complementary minus-strands leading to dsRNA formation. To do so, the polymerase specifically recognizes and binds 4 bases 5'-UGUG-3' in the conserved 3'-sequence of plus-strand RNA templates. VP2 presumably activates the autoinhibited VP1-RNA complex to coordinate packaging and genome replication. Once dsRNA synthesis is complete, the polymerase switches to the transcriptional mode, thus providing secondary transcription. In Rotavirus A (strain RVA/Human/Japan/KU/1995/G1P1A[8]) (RV-A), this protein is RNA-directed RNA polymerase.